A 428-amino-acid chain; its full sequence is Glutamate-1-semialdehyde 2,1-aminomutase 1 (428 aa).

At Lys267 the chain carries N6-(pyridoxal phosphate)lysine.

The protein belongs to the class-III pyridoxal-phosphate-dependent aminotransferase family. HemL subfamily. In terms of assembly, homodimer. Pyridoxal 5'-phosphate is required as a cofactor.

It localises to the cytoplasm. The catalysed reaction is (S)-4-amino-5-oxopentanoate = 5-aminolevulinate. Its pathway is porphyrin-containing compound metabolism; protoporphyrin-IX biosynthesis; 5-aminolevulinate from L-glutamyl-tRNA(Glu): step 2/2. The sequence is that of Glutamate-1-semialdehyde 2,1-aminomutase 1 from Staphylococcus aureus (strain Mu3 / ATCC 700698).